The primary structure comprises 1177 residues: Transcription-repair-coupling factor (1177 aa).

Residues Asp-638–Ile-799 form the Helicase ATP-binding domain. Gly-651–Thr-658 lines the ATP pocket. The short motif at Asp-752–Gln-755 is the DEEQ box element. Residues Leu-820–Thr-974 enclose the Helicase C-terminal domain.

The protein in the N-terminal section; belongs to the UvrB family. It in the C-terminal section; belongs to the helicase family. RecG subfamily.

The protein localises to the cytoplasm. Functionally, couples transcription and DNA repair by recognizing RNA polymerase (RNAP) stalled at DNA lesions. Mediates ATP-dependent release of RNAP and its truncated transcript from the DNA, and recruitment of nucleotide excision repair machinery to the damaged site. Probably required to repair non-bulky DNA lesions. The polypeptide is Transcription-repair-coupling factor (Bacillus subtilis (strain 168)).